The sequence spans 433 residues: Acetyl-CoA-benzylalcohol acetyltransferase (433 aa).

Catalysis depends on proton acceptor residues H152 and D377.

Belongs to the plant acyltransferase family.

It carries out the reaction benzyl alcohol + acetyl-CoA = benzyl acetate + CoA. It catalyses the reaction (E)-cinnamyl alcohol + acetyl-CoA = (E)-cinnamyl acetate + CoA. In terms of biological role, involved in the biosynthesis of benzyl acetate, a major constituent of the floral scent. Can use benzylalcohol, cinnamylalcohol, 3-cis-hexene-1-ol or heptanol as substrates. Has some activity with 2-phenylethanol and 2-naphtalene-ethanol. The chain is Acetyl-CoA-benzylalcohol acetyltransferase (BEAT) from Clarkia breweri (Fairy fans).